The sequence spans 143 residues: Large ribosomal subunit protein uL13 (143 aa).

It belongs to the universal ribosomal protein uL13 family. In terms of assembly, part of the 50S ribosomal subunit.

This protein is one of the early assembly proteins of the 50S ribosomal subunit, although it is not seen to bind rRNA by itself. It is important during the early stages of 50S assembly. The chain is Large ribosomal subunit protein uL13 from Variovorax paradoxus (strain S110).